Reading from the N-terminus, the 340-residue chain is Glyceraldehyde-3-phosphate dehydrogenase (340 aa).

NAD(+) contacts are provided by residues Ser11–Ile12 and Gly111. Ser140–Asn142 contacts D-glyceraldehyde 3-phosphate. Cys141 functions as the Nucleophile in the catalytic mechanism. Residue Arg169 coordinates NAD(+). His195–Gly196 is a binding site for D-glyceraldehyde 3-phosphate. Gln303 is a binding site for NAD(+).

This sequence belongs to the glyceraldehyde-3-phosphate dehydrogenase family. As to quaternary structure, homotetramer.

It localises to the cytoplasm. It catalyses the reaction D-glyceraldehyde 3-phosphate + phosphate + NADP(+) = (2R)-3-phospho-glyceroyl phosphate + NADPH + H(+). It carries out the reaction D-glyceraldehyde 3-phosphate + phosphate + NAD(+) = (2R)-3-phospho-glyceroyl phosphate + NADH + H(+). Its pathway is carbohydrate degradation; glycolysis; pyruvate from D-glyceraldehyde 3-phosphate: step 1/5. The chain is Glyceraldehyde-3-phosphate dehydrogenase from Methanococcus maripaludis (strain DSM 14266 / JCM 13030 / NBRC 101832 / S2 / LL).